Here is a 205-residue protein sequence, read N- to C-terminus: GTP cyclohydrolase-2 (205 aa).

Residue 49–53 participates in GTP binding; the sequence is RLHSE. Residues Cys54, Cys65, and Cys67 each contribute to the Zn(2+) site. GTP is bound by residues Gln70, 92-94, and Thr114; that span reads EGR. Residue Asp126 is the Proton acceptor of the active site. Arg128 serves as the catalytic Nucleophile. The GTP site is built by Thr149 and Lys154.

It belongs to the GTP cyclohydrolase II family. Zn(2+) serves as cofactor.

It catalyses the reaction GTP + 4 H2O = 2,5-diamino-6-hydroxy-4-(5-phosphoribosylamino)-pyrimidine + formate + 2 phosphate + 3 H(+). It functions in the pathway cofactor biosynthesis; riboflavin biosynthesis; 5-amino-6-(D-ribitylamino)uracil from GTP: step 1/4. Catalyzes the conversion of GTP to 2,5-diamino-6-ribosylamino-4(3H)-pyrimidinone 5'-phosphate (DARP), formate and pyrophosphate. The polypeptide is GTP cyclohydrolase-2 (Pseudomonas paraeruginosa (strain DSM 24068 / PA7) (Pseudomonas aeruginosa (strain PA7))).